We begin with the raw amino-acid sequence, 833 residues long: DNA ligase (833 aa).

Residues 35–39, 84–85, and glutamate 115 contribute to the NAD(+) site; these read DADYD and SL. Lysine 117 functions as the N6-AMP-lysine intermediate in the catalytic mechanism. The NAD(+) site is built by arginine 138, glutamate 175, lysine 292, and lysine 316. 4 residues coordinate Zn(2+): cysteine 410, cysteine 413, cysteine 428, and cysteine 434. The 84-residue stretch at 750-833 folds into the BRCT domain; that stretch reads LQTGPLDGQT…AFLGDHGQQP (84 aa).

Belongs to the NAD-dependent DNA ligase family. LigA subfamily. Mg(2+) is required as a cofactor. Mn(2+) serves as cofactor.

It catalyses the reaction NAD(+) + (deoxyribonucleotide)n-3'-hydroxyl + 5'-phospho-(deoxyribonucleotide)m = (deoxyribonucleotide)n+m + AMP + beta-nicotinamide D-nucleotide.. DNA ligase that catalyzes the formation of phosphodiester linkages between 5'-phosphoryl and 3'-hydroxyl groups in double-stranded DNA using NAD as a coenzyme and as the energy source for the reaction. It is essential for DNA replication and repair of damaged DNA. This Xanthomonas euvesicatoria pv. vesicatoria (strain 85-10) (Xanthomonas campestris pv. vesicatoria) protein is DNA ligase.